A 282-amino-acid chain; its full sequence is Succinate dehydrogenase [ubiquinone] iron-sulfur subunit, mitochondrial (282 aa).

A mitochondrion-targeting transit peptide spans 1-21; sequence MLRGSTSVCRSLELVTQAARY. Residues 39 to 129 form the 2Fe-2S ferredoxin-type domain; sequence EIYRFNPEEP…TTKIYPLPHM (91 aa). 4 residues coordinate [2Fe-2S] cluster: C89, C94, C97, and C109. Positions 172–202 constitute a 4Fe-4S ferredoxin-type domain; that stretch reads EQEKLDGLYECILCACCSASCPSYWWNADKY. [4Fe-4S] cluster-binding residues include C182, C185, and C188. [3Fe-4S] cluster is bound at residue C192. W197 is an a rhodoquinol binding site. W197 contacts a ubiquinone. Residues C239 and C245 each coordinate [3Fe-4S] cluster. C249 lines the [4Fe-4S] cluster pocket.

This sequence belongs to the succinate dehydrogenase/fumarate reductase iron-sulfur protein family. In terms of assembly, component of the mitochondrial electron transport chain complex II composed of four subunits: a flavoprotein (Fp), an iron-sulfur protein (Ip), and a large cytochrome b (CybL) subunit and a small cytochrome b (CybS) subunit. There are 2 developmental stage-specific forms of complex II which have the Ip and CybL subunits in common. Complex II from the free-living larvae (aerobic environment) acts as a succinate dehydrogenase and is composed of the common subunit Ip and CybL and the stage specific subunits FpL and CybSL. Complex II from parasitic larvae and adults (anaerobic environment) acts as a fumarate reductase and is composed of the common subunit Ip and CybL and the stage specific subunits FpA and CybSA. The cofactor is [2Fe-2S] cluster. [3Fe-4S] cluster is required as a cofactor. [4Fe-4S] cluster serves as cofactor. Expressed in adult muscles (at protein level).

It is found in the mitochondrion inner membrane. It catalyses the reaction a ubiquinone + succinate = a ubiquinol + fumarate. The catalysed reaction is a rhodoquinone + succinate = a rhodoquinol + fumarate. It functions in the pathway carbohydrate metabolism; tricarboxylic acid cycle; fumarate from succinate (eukaryal route): step 1/1. Inhibited by the fungicide flutolanil. Iron-sulfur protein (Ip) subunit of the mitochondrial electron transport chain complex II which, together with the flavoprotein (Fp) subunit forms the catalytic core of the complex. During the free-living egg-larvae stages, which occur in an aerobic environment, complex II acts as a succinate dehydrogenase by transferring electrons from succinate to ubiquinone. During the parasitic larvae and adult stages, which occur in an anaerobic environment, complex II acts as a fumarate reductase by transferring electrons from rhodoquinol to fumarate. The protein is Succinate dehydrogenase [ubiquinone] iron-sulfur subunit, mitochondrial of Ascaris suum (Pig roundworm).